The chain runs to 787 residues: Aminodeoxychorismate synthase (787 aa).

The 218-residue stretch at 16-233 (HVLFIDSYDS…LKLSFINNVK (218 aa)) folds into the Glutamine amidotransferase type-1 domain. Catalysis depends on residues cysteine 112, histidine 207, and glutamate 209. Positions 304–787 (MSSSVISENT…KLESNLQIFM (484 aa)) are PABB component.

It in the C-terminal section; belongs to the anthranilate synthase component I family.

It is found in the cytoplasm. The catalysed reaction is chorismate + L-glutamine = 4-amino-4-deoxychorismate + L-glutamate. The protein operates within cofactor biosynthesis; tetrahydrofolate biosynthesis; 4-aminobenzoate from chorismate: step 1/2. Catalyzes the biosynthesis of 4-amino-4-deoxychorismate (ADC) from chorismate and glutamine. Required for the synthesis of 4-aminobenzoate (PABA), an important component in tetrahydrofolate biosynthesis. This is Aminodeoxychorismate synthase (ABZ1) from Saccharomyces cerevisiae (strain ATCC 204508 / S288c) (Baker's yeast).